The following is a 459-amino-acid chain: ATP-dependent protease ATPase subunit HslU (459 aa).

ATP contacts are provided by residues Val-18, 60 to 65, Asp-269, Glu-337, and Arg-409; that span reads GVGKTE.

The protein belongs to the ClpX chaperone family. HslU subfamily. As to quaternary structure, a double ring-shaped homohexamer of HslV is capped on each side by a ring-shaped HslU homohexamer. The assembly of the HslU/HslV complex is dependent on binding of ATP.

Its subcellular location is the cytoplasm. Its function is as follows. ATPase subunit of a proteasome-like degradation complex; this subunit has chaperone activity. The binding of ATP and its subsequent hydrolysis by HslU are essential for unfolding of protein substrates subsequently hydrolyzed by HslV. HslU recognizes the N-terminal part of its protein substrates and unfolds these before they are guided to HslV for hydrolysis. The chain is ATP-dependent protease ATPase subunit HslU from Myxococcus xanthus (strain DK1622).